We begin with the raw amino-acid sequence, 707 residues long: Polyribonucleotide nucleotidyltransferase (707 aa).

Positions 488 and 494 each coordinate Mg(2+). Positions 555–615 constitute a KH domain; the sequence is PIIKVTKIDP…ENVDNAIALI (61 aa). Positions 625 to 692 constitute an S1 motif domain; it reads GEILEGKITR…DLGRLQFKRV (68 aa).

The protein belongs to the polyribonucleotide nucleotidyltransferase family. Mg(2+) is required as a cofactor.

Its subcellular location is the cytoplasm. It catalyses the reaction RNA(n+1) + phosphate = RNA(n) + a ribonucleoside 5'-diphosphate. Involved in mRNA degradation. Catalyzes the phosphorolysis of single-stranded polyribonucleotides processively in the 3'- to 5'-direction. The polypeptide is Polyribonucleotide nucleotidyltransferase (Thermotoga neapolitana (strain ATCC 49049 / DSM 4359 / NBRC 107923 / NS-E)).